The following is a 227-amino-acid chain: tRNA (guanine-N(1)-)-methyltransferase (227 aa).

S-adenosyl-L-methionine contacts are provided by residues Gly112 and 131–136 (LGDFVL).

The protein belongs to the RNA methyltransferase TrmD family. As to quaternary structure, homodimer.

It localises to the cytoplasm. It catalyses the reaction guanosine(37) in tRNA + S-adenosyl-L-methionine = N(1)-methylguanosine(37) in tRNA + S-adenosyl-L-homocysteine + H(+). Specifically methylates guanosine-37 in various tRNAs. The protein is tRNA (guanine-N(1)-)-methyltransferase of Trichodesmium erythraeum (strain IMS101).